We begin with the raw amino-acid sequence, 331 residues long: Probable deacetylase MTH_1194 (331 aa).

The Proton donor/acceptor role is filled by H118. Zn(2+)-binding residues include D155, H157, and D244.

The protein belongs to the histone deacetylase family. It depends on Zn(2+) as a cofactor.

Functionally, probable deacetylase. This is Probable deacetylase MTH_1194 from Methanothermobacter thermautotrophicus (strain ATCC 29096 / DSM 1053 / JCM 10044 / NBRC 100330 / Delta H) (Methanobacterium thermoautotrophicum).